Reading from the N-terminus, the 143-residue chain is Nucleoside diphosphate kinase (143 aa).

6 residues coordinate ATP: lysine 11, phenylalanine 59, arginine 87, threonine 93, arginine 104, and asparagine 114. The Pros-phosphohistidine intermediate role is filled by histidine 117.

The protein belongs to the NDK family. Homotetramer. Mg(2+) serves as cofactor.

The protein localises to the cytoplasm. It catalyses the reaction a 2'-deoxyribonucleoside 5'-diphosphate + ATP = a 2'-deoxyribonucleoside 5'-triphosphate + ADP. It carries out the reaction a ribonucleoside 5'-diphosphate + ATP = a ribonucleoside 5'-triphosphate + ADP. Major role in the synthesis of nucleoside triphosphates other than ATP. The ATP gamma phosphate is transferred to the NDP beta phosphate via a ping-pong mechanism, using a phosphorylated active-site intermediate. The chain is Nucleoside diphosphate kinase from Alcanivorax borkumensis (strain ATCC 700651 / DSM 11573 / NCIMB 13689 / SK2).